The chain runs to 201 residues: Imidazole glycerol phosphate synthase subunit HisH 1 (201 aa).

One can recognise a Glutamine amidotransferase type-1 domain in the interval 1–201 (MIALIDYKAG…LKLLENFARL (201 aa)). Cys-80 acts as the Nucleophile in catalysis. Residues His-183 and Glu-185 contribute to the active site.

In terms of assembly, heterodimer of HisH and HisF.

It localises to the cytoplasm. The enzyme catalyses 5-[(5-phospho-1-deoxy-D-ribulos-1-ylimino)methylamino]-1-(5-phospho-beta-D-ribosyl)imidazole-4-carboxamide + L-glutamine = D-erythro-1-(imidazol-4-yl)glycerol 3-phosphate + 5-amino-1-(5-phospho-beta-D-ribosyl)imidazole-4-carboxamide + L-glutamate + H(+). The catalysed reaction is L-glutamine + H2O = L-glutamate + NH4(+). The protein operates within amino-acid biosynthesis; L-histidine biosynthesis; L-histidine from 5-phospho-alpha-D-ribose 1-diphosphate: step 5/9. Its function is as follows. IGPS catalyzes the conversion of PRFAR and glutamine to IGP, AICAR and glutamate. The HisH subunit provides the glutamine amidotransferase activity that produces the ammonia necessary to HisF for the synthesis of IGP and AICAR. The chain is Imidazole glycerol phosphate synthase subunit HisH 1 (hisH1) from Campylobacter jejuni subsp. jejuni serotype O:23/36 (strain 81-176).